The following is a 114-amino-acid chain: Hydrogenase maturation factor HypA (114 aa).

His-2 serves as a coordination point for Ni(2+). Zn(2+) is bound by residues Cys-73, Cys-76, Cys-89, and Cys-92.

The protein belongs to the HypA/HybF family.

In terms of biological role, involved in the maturation of [NiFe] hydrogenases. Required for nickel insertion into the metal center of the hydrogenase. This Psychromonas ingrahamii (strain DSM 17664 / CCUG 51855 / 37) protein is Hydrogenase maturation factor HypA.